Reading from the N-terminus, the 211-residue chain is Pyridoxine/pyridoxamine 5'-phosphate oxidase (211 aa).

Residues Arg-7–Tyr-10 and Lys-65 contribute to the substrate site. FMN is bound by residues Arg-60 to Lys-65, Tyr-75 to Thr-76, Arg-81, Lys-82, and Gln-104. Tyr-122, Arg-126, and Ser-130 together coordinate substrate. Residues Gln-139–Ser-140 and Trp-184 contribute to the FMN site. Arg-190–His-192 is a substrate binding site. Arg-194 serves as a coordination point for FMN.

Belongs to the pyridoxamine 5'-phosphate oxidase family. As to quaternary structure, homodimer. The cofactor is FMN.

It catalyses the reaction pyridoxamine 5'-phosphate + O2 + H2O = pyridoxal 5'-phosphate + H2O2 + NH4(+). The enzyme catalyses pyridoxine 5'-phosphate + O2 = pyridoxal 5'-phosphate + H2O2. It participates in cofactor metabolism; pyridoxal 5'-phosphate salvage; pyridoxal 5'-phosphate from pyridoxamine 5'-phosphate: step 1/1. It functions in the pathway cofactor metabolism; pyridoxal 5'-phosphate salvage; pyridoxal 5'-phosphate from pyridoxine 5'-phosphate: step 1/1. In terms of biological role, catalyzes the oxidation of either pyridoxine 5'-phosphate (PNP) or pyridoxamine 5'-phosphate (PMP) into pyridoxal 5'-phosphate (PLP). This is Pyridoxine/pyridoxamine 5'-phosphate oxidase from Aliivibrio fischeri (strain ATCC 700601 / ES114) (Vibrio fischeri).